We begin with the raw amino-acid sequence, 1849 residues long: Immunoglobulin A1 protease autotransporter (1849 aa).

A signal peptide spans 1–25; the sequence is MLNKKFKLNFIALTVAYALTPYTEA. One can recognise a Peptidase S6 domain in the interval 26 to 343; that stretch reads ALVRDDVDYQ…NIYKHEFAEK (318 aa). S299 is an active-site residue. A disordered region spans residues 998–1538; that stretch reads VEKRNQTVDT…EPVELPTENA (541 aa). The segment covering 1004–1015 has biased composition (polar residues); sequence TVDTTNITTPND. The span at 1066–1077 shows a compositional bias: low complexity; that stretch reads EETNTANSTETA. Polar residues-rich tracts occupy residues 1079–1097 and 1138–1151; these read KSDTATQTENPNSESVPSE and VEANTQTNEATQSE. Positions 1152-1166 are enriched in basic and acidic residues; it reads GKTEETQTAETKSEP. Positions 1167–1184 are enriched in polar residues; sequence TESVTVSENQPEKTVSQS. A compositionally biased stretch (basic and acidic residues) spans 1185 to 1205; the sequence is TEDKVVVEKEEKAKVETEETQ. A compositionally biased stretch (polar residues) spans 1237–1268; it reads ALQQTQPTTVAAAETTSPNSKPAEETQQPSEK. Residues 1291–1301 show a composition bias toward basic and acidic residues; that stretch reads ETAKVEKEKTQ. 3 stretches are compositionally biased toward low complexity: residues 1314 to 1330, 1345 to 1361, and 1369 to 1381; these read QEQPAAKPQAQTKPQAE, PQPQAQPQTQSTAVPTT, and KPAAKPQAQAKPQ. Over residues 1388–1437 the composition is skewed to polar residues; the sequence is NVSTVNTKEPQSQTSATVSTEQPAKETSSNVEQPAPENSINTGSATTMTE. The segment covering 1438-1457 has biased composition (basic and acidic residues); that stretch reads TAEKSDKPQMETVTENDRQP. Residues 1493 to 1513 show a composition bias toward low complexity; that stretch reads EETTVASTQETTVDNSVSTPK. Positions 1597–1849 constitute an Autotransporter domain; sequence NNEGQYNVWI…TAEVKLSFSF (253 aa).

Its subcellular location is the periplasm. It is found in the secreted. It localises to the cell surface. The protein localises to the cell outer membrane. The catalysed reaction is Cleavage of immunoglobulin A molecules at certain Pro-|-Xaa bonds in the hinge region. No small molecule substrates are known.. In terms of biological role, virulence factor; cleaves host immunoglobulin A producing intact Fc and Fab fragments. The polypeptide is Immunoglobulin A1 protease autotransporter (iga) (Haemophilus influenzae).